Consider the following 245-residue polypeptide: tRNA pseudouridine synthase A (245 aa).

D52 functions as the Nucleophile in the catalytic mechanism. A substrate-binding site is contributed by Y111.

Belongs to the tRNA pseudouridine synthase TruA family. In terms of assembly, homodimer.

It catalyses the reaction uridine(38/39/40) in tRNA = pseudouridine(38/39/40) in tRNA. In terms of biological role, formation of pseudouridine at positions 38, 39 and 40 in the anticodon stem and loop of transfer RNAs. In Wolbachia sp. subsp. Drosophila simulans (strain wRi), this protein is tRNA pseudouridine synthase A.